A 795-amino-acid polypeptide reads, in one-letter code: Myosin light chain kinase 3 (795 aa).

Ser155 bears the Phosphoserine mark. Disordered stretches follow at residues Gly236–Asn257 and Ser305–Leu328. A phosphoserine mark is found at Ser351 and Ser432. The tract at residues Asp367–Leu452 is disordered. The Protein kinase domain occupies Val491–Leu746. Residues Leu497 to Val505 and Lys520 each bind ATP. Catalysis depends on Asp612, which acts as the Proton acceptor.

This sequence belongs to the protein kinase superfamily. CAMK Ser/Thr protein kinase family. Mg(2+) is required as a cofactor. In terms of processing, phosphorylated on serine residues. As to expression, restricted to cardiomyocytes (at protein level). Down-regulated in heart after experimental myocardial infarction at the protein level; no significant changes at the mRNA level.

The protein resides in the cytoplasm. The enzyme catalyses L-seryl-[myosin light chain] + ATP = O-phospho-L-seryl-[myosin light chain] + ADP + H(+). It catalyses the reaction L-threonyl-[myosin light chain] + ATP = O-phospho-L-threonyl-[myosin light chain] + ADP + H(+). In terms of biological role, kinase that phosphorylates MYL2 in vitro. Has been proposed to be calmodulin-dependent, although MYL2 phosphorylation has also been observed in the presence or absence of calmodulin. Promotes sarcomere formation in cardiomyocytes and increases cardiomyocyte contractility. The sequence is that of Myosin light chain kinase 3 (Mylk3) from Mus musculus (Mouse).